A 218-amino-acid chain; its full sequence is Mediator of RNA polymerase II transcription subunit 20 (218 aa).

This sequence belongs to the Mediator complex subunit 20 family. Component of the Mediator complex.

The protein localises to the nucleus. Component of the Mediator complex, a coactivator involved in the regulated transcription of nearly all RNA polymerase II-dependent genes. Mediator functions as a bridge to convey information from gene-specific regulatory proteins to the basal RNA polymerase II transcription machinery. Mediator is recruited to promoters by direct interactions with regulatory proteins and serves as a scaffold for the assembly of a functional preinitiation complex with RNA polymerase II and the general transcription factors. The chain is Mediator of RNA polymerase II transcription subunit 20 (SRB2) from Yarrowia lipolytica (strain CLIB 122 / E 150) (Yeast).